A 371-amino-acid polypeptide reads, in one-letter code: Bifunctional enzyme IspD/IspF (371 aa).

Residues methionine 1–isoleucine 214 form a 2-C-methyl-D-erythritol 4-phosphate cytidylyltransferase region. The tract at residues lysine 215–aspartate 371 is 2-C-methyl-D-erythritol 2,4-cyclodiphosphate synthase. 2 residues coordinate a divalent metal cation: aspartate 221 and histidine 223. Residues aspartate 221 to histidine 223 and histidine 247 to serine 248 each bind 4-CDP-2-C-methyl-D-erythritol 2-phosphate. Histidine 255 contributes to the a divalent metal cation binding site. 4-CDP-2-C-methyl-D-erythritol 2-phosphate contacts are provided by residues aspartate 269–glycine 271, phenylalanine 274–asparagine 278, and lysine 355.

The protein in the N-terminal section; belongs to the IspD/TarI cytidylyltransferase family. IspD subfamily. This sequence in the C-terminal section; belongs to the IspF family. A divalent metal cation serves as cofactor.

It catalyses the reaction 2-C-methyl-D-erythritol 4-phosphate + CTP + H(+) = 4-CDP-2-C-methyl-D-erythritol + diphosphate. The catalysed reaction is 4-CDP-2-C-methyl-D-erythritol 2-phosphate = 2-C-methyl-D-erythritol 2,4-cyclic diphosphate + CMP. Its pathway is isoprenoid biosynthesis; isopentenyl diphosphate biosynthesis via DXP pathway; isopentenyl diphosphate from 1-deoxy-D-xylulose 5-phosphate: step 2/6. It participates in isoprenoid biosynthesis; isopentenyl diphosphate biosynthesis via DXP pathway; isopentenyl diphosphate from 1-deoxy-D-xylulose 5-phosphate: step 4/6. In terms of biological role, bifunctional enzyme that catalyzes the formation of 4-diphosphocytidyl-2-C-methyl-D-erythritol from CTP and 2-C-methyl-D-erythritol 4-phosphate (MEP) (IspD), and catalyzes the conversion of 4-diphosphocytidyl-2-C-methyl-D-erythritol 2-phosphate (CDP-ME2P) to 2-C-methyl-D-erythritol 2,4-cyclodiphosphate (ME-CPP) with a corresponding release of cytidine 5-monophosphate (CMP) (IspF). The polypeptide is Bifunctional enzyme IspD/IspF (Pelagibacter ubique (strain HTCC1062)).